A 286-amino-acid polypeptide reads, in one-letter code: Serine carboxypeptidase-like (286 aa).

S4 is an active-site residue. Cystine bridges form between C83–C98 and C121–C126. D193 is an active-site residue. A substrate-binding site is contributed by C196. N227 is a glycosylation site (N-linked (GlcNAc...) asparagine). Residue H250 is part of the active site.

The protein belongs to the peptidase S10 family.

Functionally, involved in degradation of small peptides. This is Serine carboxypeptidase-like from Pisum sativum (Garden pea).